We begin with the raw amino-acid sequence, 76 residues long: DNA polymerase III subunit theta (76 aa).

The DNA polymerase holoenzyme is a complex that contains 10 different types of subunits. These subunits are organized into 3 functionally essential subassemblies: the pol III core, the beta sliding clamp processivity factor and the clamp-loading complex. The pol III core (subunits alpha,epsilon and theta) contains the polymerase and the 3'-5' exonuclease proofreading activities. The polymerase is tethered to the template via the sliding clamp processivity factor. The clamp-loading complex assembles the beta processivity factor onto the primer template and plays a central role in the organization and communication at the replication fork. This complex contains delta, delta', psi and chi, and copies of either or both of two different DnaX proteins, gamma and tau. The composition of the holoenzyme is, therefore: (alpha,epsilon,theta)[2]-(gamma/tau)[3]-delta,delta', psi,chi-beta[4].

The enzyme catalyses DNA(n) + a 2'-deoxyribonucleoside 5'-triphosphate = DNA(n+1) + diphosphate. Functionally, DNA polymerase III is a complex, multichain enzyme responsible for most of the replicative synthesis in bacteria. This DNA polymerase also exhibits 3' to 5' exonuclease activity. The exact function of the theta subunit is unknown. This chain is DNA polymerase III subunit theta (holE), found in Escherichia coli O157:H7.